We begin with the raw amino-acid sequence, 425 residues long: MGMTMTQKILAKHAKLNEVKKGQLIEADLDVVLGNDITSPVAIREFEKLGIEDVYDKTKVVMVLDHFTPNKDIKSAEQCKFTRSFAKSKGVVNFFDVGDMGIEHVLLPEKGIVTAGDVIIGADSHTCTYGALGAFSTGVGSTDMGAGMATGKCWFKVPGAIKFVLKNKPNKWISGKDIILHIIGEIGVDGALYKSMEFCGDGVEYLSMDDRFTICNMAIEAGAKNGIFPVDDKTMEYINSHKCSTMTKDVNIYEADEDAVYDEVYEIDLAKLKETVAFPHLPENTRTVDEIDKDIKIDQVVIGSCTNGRISDLEVVAEIMKGKKVADGVRVMIFPGTQKVYLEAIEKGYITTFIEAGAAVSTPTCGPCLGGHMGILAAGEKSISTTNRNFVGRMGHVDSEVYLASPAVAAASAITGKISKPSEII.

[4Fe-4S] cluster contacts are provided by Cys-305, Cys-365, and Cys-368.

The protein belongs to the aconitase/IPM isomerase family. LeuC type 2 subfamily. Heterodimer of LeuC and LeuD. Requires [4Fe-4S] cluster as cofactor.

It carries out the reaction (2R,3S)-3-isopropylmalate = (2S)-2-isopropylmalate. It participates in amino-acid biosynthesis; L-leucine biosynthesis; L-leucine from 3-methyl-2-oxobutanoate: step 2/4. Functionally, catalyzes the isomerization between 2-isopropylmalate and 3-isopropylmalate, via the formation of 2-isopropylmaleate. This is 3-isopropylmalate dehydratase large subunit from Clostridioides difficile (strain 630) (Peptoclostridium difficile).